Here is a 159-residue protein sequence, read N- to C-terminus: Large ribosomal subunit protein eL29 (159 aa).

Over residues 1 to 26 (MAKSKNHTTHNQSRKWHRNGIKKPRS) the composition is skewed to basic residues. The tract at residues 1 to 32 (MAKSKNHTTHNQSRKWHRNGIKKPRSQRYESL) is disordered. The residue at position 5 (K5) is an N6-methyllysine. Position 31 is a phosphoserine (S31). An N6-acetyllysine modification is found at K33. Basic residues predominate over residues 117–127 (RLCRPKAKAKA). A disordered region spans residues 117–159 (RLCRPKAKAKAKAKDQTKAQAAAPASVPAQAPKRTQAPTKASE). Low complexity predominate over residues 134 to 149 (KAQAAAPASVPAQAPK). S142 is modified (phosphoserine).

The protein belongs to the eukaryotic ribosomal protein eL29 family. As to quaternary structure, component of the large ribosomal subunit.

It localises to the cytoplasm. Its function is as follows. Component of the large ribosomal subunit. The ribosome is a large ribonucleoprotein complex responsible for the synthesis of proteins in the cell. The chain is Large ribosomal subunit protein eL29 (RPL29) from Homo sapiens (Human).